Consider the following 1465-residue polypeptide: Protein clueless (1465 aa).

Residues 1-87 (MALEIDAKNA…SNGHSENGDA (87 aa)) form a disordered region. The segment covering 30-51 (HNNNNNAPAAGEKNLVNGSSAA) has biased composition (low complexity). Residues 52–61 (TKKKGKKNRN) show a composition bias toward basic residues. Position 273 is a phosphoserine (Ser273). The Clu domain maps to 427–669 (RAEDAFSSKL…RTFPPDVNFL (243 aa)). Over residues 742-767 (AEKQEEPNEEQPEKTEEQPAEKEESK) the composition is skewed to basic and acidic residues. Disordered stretches follow at residues 742–776 (AEKQEEPNEEQPEKTEEQPAEKEESKPTPSETKSA) and 962–1021 (VSSD…SNSD). Positions 970–986 (KQPRNNSGKHNKHKAAK) are enriched in basic residues. 2 stretches are compositionally biased toward low complexity: residues 987 to 1003 (ASKPQAAAAQNGNATAA) and 1010 to 1020 (ATTSGATSSNS). TPR repeat units follow at residues 1114-1147 (AYNFYTTGQAKIQQGMLKEGYELISEALNLLNNV), 1240-1273 (ALIDSNISLILHALGEYELSLRFIEHALKLNLKY), and 1275-1308 (GNKAMHVAVSYHLMARIQSCMGDFRSALNNEKET). The tract at residues 1428 to 1465 (NNNDNASETEQPKDEASAAGTPTQLTNGSEESTATVSS) is disordered. Positions 1447-1465 (GTPTQLTNGSEESTATVSS) are enriched in polar residues.

This sequence belongs to the CLU family.

The protein localises to the cytoplasm. MRNA-binding protein involved in proper cytoplasmic distribution of mitochondria. The polypeptide is Protein clueless (Drosophila virilis (Fruit fly)).